Here is a 439-residue protein sequence, read N- to C-terminus: Xylose isomerase (439 aa).

Catalysis depends on residues H101 and D104. Residues E232, E268, H271, D296, D307, D309, and D339 each coordinate Mg(2+).

It belongs to the xylose isomerase family. As to quaternary structure, homotetramer. Mg(2+) serves as cofactor.

Its subcellular location is the cytoplasm. It catalyses the reaction alpha-D-xylose = alpha-D-xylulofuranose. The protein is Xylose isomerase of Marinomonas sp. (strain MWYL1).